Consider the following 742-residue polypeptide: mRNA export factor ICP27 homolog (742 aa).

The segment covering 1–11 (MELHSRGRHDA) has biased composition (basic and acidic residues). Residues 1-202 (MELHSRGRHD…NHHGSSAGPQ (202 aa)) form a disordered region. Residues 72–85 (SHHHRPCVPARRPR) show a composition bias toward basic residues. Positions 153 to 171 (KSYDNDDGEPHHHGGDSTH) are enriched in basic and acidic residues. A compositionally biased stretch (polar residues) spans 179–202 (CPTTFGSSHPSSANNHHGSSAGPQ). Residues Cys387, His494, Cys496, and Cys501 each coordinate Zn(2+). The CHC2-type zinc finger occupies 387–501 (CILDHQDGWG…QCHECQNEMC (115 aa)). Residues 540 to 742 (ASNHATAGGQ…MLCYSDDMDD (203 aa)) form a disordered region. The segment covering 578–587 (YDKKDREGSH) has biased composition (basic and acidic residues). Over residues 614–626 (GELEEDEDSDDAS) the composition is skewed to acidic residues. Polar residues predominate over residues 692–703 (QSANGNHSTTAT).

This sequence belongs to the HHV-1 ICP27 protein family. As to quaternary structure, self-associates and forms high-molecular-mass complexes. Interacts with host DDX39A and DDX39B; these interactions are required for UL69 function in mRNA export. Interacts with host SUPT6H, EIF4A1 and PABPC1. In terms of processing, phosphorylated by UL97 and host CDK1, CDK7 and CD9. Phosphorylation by CDKs impacts on UL69 nuclear localization and activity.

It localises to the virion tegument. The protein localises to the virion. It is found in the host nucleus. The protein resides in the host cytoplasm. Functionally, immediate early (EI) protein that plays many roles during productive infection including regulation of host cell cycle progression, regulation of viral gene expression or nuclear export of intronless viral RNAs. Acts as a transcriptional transactivator via interaction with the cellular transcription elongation factor SUPT6H and as a nuclear RNA export factor via interaction with UAP56, a component of the cellular mRNA export machinery. This is mRNA export factor ICP27 homolog from Human cytomegalovirus (strain Merlin) (HHV-5).